A 205-amino-acid polypeptide reads, in one-letter code: Meiotic nuclear division protein 1 homolog (205 aa).

N-acetylserine is present on Ser-2. A coiled-coil region spans residues 83 to 173 (KRKLEALNSQ…EAANRWTDNI (91 aa)).

The protein belongs to the MND1 family. Heterodimer with PSMC3IP/HOP2. MND1-PSMC3IP interacts with DMC1 and RAD51 and binds to ssDNA and dsDNA showing no preference for either form of DNA.

It localises to the nucleus. Required for proper homologous chromosome pairing and efficient cross-over and intragenic recombination during meiosis. Stimulates both DMC1- and RAD51-mediated homologous strand assimilation, which is required for the resolution of meiotic double-strand breaks. The protein is Meiotic nuclear division protein 1 homolog of Mus musculus (Mouse).